The primary structure comprises 134 residues: Complexin-1 (134 aa).

Disordered regions lie at residues 1–60 (MEFV…AERE) and 74–113 (KKEEREAEAQAAMEANSEGSLTRPKKAIPPGCGDEVEEED). A compositionally biased stretch (basic and acidic residues) spans 15-60 (DMGKMLGGDEEKDPDAAKKEEERQEALRQAEEERKAKYAKMEAERE). Residues 29 to 69 (DAAKKEEERQEALRQAEEERKAKYAKMEAEREAVRQGIRDK) adopt a coiled-coil conformation. The interval 48-70 (RKAKYAKMEAEREAVRQGIRDKY) is interaction with the SNARE complex.

It belongs to the complexin/synaphin family. As to quaternary structure, binds to the SNARE core complex containing SNAP25, VAMP2 and STX1A. As to expression, nervous system. In hippocampus and cerebellum, expressed mainly by inhibitory neurons. Overexpressed in substantia nigra from patients with Parkinson disease.

Its subcellular location is the cytoplasm. It is found in the cytosol. It localises to the perikaryon. The protein localises to the presynapse. Positively regulates a late step in exocytosis of various cytoplasmic vesicles, such as synaptic vesicles and other secretory vesicles. Organizes the SNAREs into a cross-linked zigzag topology that, when interposed between the vesicle and plasma membranes, is incompatible with fusion, thereby preventing SNAREs from releasing neurotransmitters until an action potential arrives at the synapse. Also involved in glucose-induced secretion of insulin by pancreatic beta-cells. Essential for motor behavior. The chain is Complexin-1 (CPLX1) from Homo sapiens (Human).